The chain runs to 143 residues: Crossover junction endodeoxyribonuclease Hjc (143 aa).

Position 12 (Glu12) interacts with Mg(2+). The active site involves Ser32. Residues Asp42 and Glu55 each coordinate Mg(2+).

The protein belongs to the Holliday junction resolvase Hjc family. Homodimer. Interacts with PCNA subunit PCNA1. Requires Mg(2+) as cofactor.

The enzyme catalyses Endonucleolytic cleavage at a junction such as a reciprocal single-stranded crossover between two homologous DNA duplexes (Holliday junction).. With respect to regulation, autoinhibits at very high concentrations, possibly because of extreme junction distortion. Inhibition (and activity at low concentrations of enzyme) is stimulated by dsDNA and Sso7d. Activity stimulated by PCNA subunit PCNA1. Its function is as follows. A structure-specific endonuclease that resolves Holliday junction (HJ) intermediates during genetic recombination; may have some degree of sequence preference in a mobile junction. Cleaves 4-way DNA junctions introducing paired nicks in opposing strands, leaving a 5'-terminal phosphate and a 3'-terminal hydroxyl group that are subsequently ligated to produce recombinant products. Can cleave all 4 strands 3 bases 3' of the junction center. Cleaves both mobile and immobile junctions. Modifies the structure of the 4-way DNA junction, a model Holliday junction structure. The protein forms multiple complexes with 4-way DNA, suggesting more than 1 homodimer can bind to each junction. The protein is Crossover junction endodeoxyribonuclease Hjc of Saccharolobus solfataricus (strain ATCC 35092 / DSM 1617 / JCM 11322 / P2) (Sulfolobus solfataricus).